A 496-amino-acid chain; its full sequence is MGYHSVFIAVFLWSSMVCHNGLAMMDDGKLTSSSGPPNYDYADALAKAILFFEGQRSGKLPSSQRVKWREDSALSDGKLQNVNLMGGYYDAGDNVKFGWPMAFSTSLLSWAAVEYESEISSVNQLGYLQSAIRWGADFMLRAHTSPTTLYTQVGDGNADHNCWERPEDMDTPRTVYKIDANSPGTEVAAEYAAALSAASIVFKKIDAKYSSTLLSHSKSLFDFADKNRGSYSGSCPFYCSYSGYQDELLWAAAWLYKASGESKYLSYIISNQGWSQTVSEFSWDNKFVGAQTLLTEEFYGGKKDLAKIKTDAESFICAVMPGSNSRQIKTTPGGLLFTRDSSNLQYTTSSTMVLFIFSRILNRNHINGINCGSSHFTASQIRGFAKTQVEYILGKNPMKMSYMVGFGSKYPKQLHHRGSSIPSIKVHPAKVGCNAGLSDYYNSANPNPNTHVGAIVGGPDSNDRFNDARSDYSHAEPTTYINAAFVASISALLAKT.

Residues 1–23 (MGYHSVFIAVFLWSSMVCHNGLA) form the signal peptide. The Nucleophile role is filled by aspartate 93. Residues histidine 415, aspartate 467, and glutamate 476 contribute to the active site.

The protein belongs to the glycosyl hydrolase 9 (cellulase E) family.

It catalyses the reaction Endohydrolysis of (1-&gt;4)-beta-D-glucosidic linkages in cellulose, lichenin and cereal beta-D-glucans.. Functionally, involved in ripening fruit process. In Phaseolus vulgaris (Kidney bean), this protein is Endoglucanase.